We begin with the raw amino-acid sequence, 285 residues long: Probable methyltransferase ltbC (285 aa).

The disordered stretch occupies residues 1-22; sequence MASTGQTNNYKQGYSSQTVETQ.

It belongs to the class I-like SAM-binding methyltransferase superfamily. Monomer.

Its function is as follows. Probable methyltransferase; part of the gene cluster that mediates the biosynthesis of luteodienoside A, a glycosylated polyketide consisting of an unusual 1-O-beta-D-glucopyranosyl-myo-inositol (glucinol) ester of 3-hydroxy-2,2,4-trimethylocta-4,6-dienoic acid. The HR-PKS ltbA produces the trimethylated polyketide chain from acetyl-CoA, malonyl-CoA and S-adenosylmethionine (SAM), and the ltbA cAT domain then uses glucinol produced by the glycosyltransferase ltbB as an offloading substrate to release luteodienoside A. Since ltbA and ltbB are sufficient for the biosynthesis of luteodienoside A, the functions of the methyltransferase ltbC and the FAD-binding monooxygenase ltbD within the pathway remain obscur. This Aspergillus luteorubrus protein is Probable methyltransferase ltbC.